Reading from the N-terminus, the 283-residue chain is MRTQWPSPAKLNLFLYITGQRADGYHTLQTLFQFLDYGDTISIELRDDGDIRLLTPVEGVEHEDNLIVRAARLLMKTAADSGRLPTGSGANISIDKRLPMGGGLGGGSSNAATVLVALNHLWQCGLSMDELAEMGLTLGADVPVFVRGHAAFAEGVGEILTPVDPPEKWYLVAHPGVSIPTPVIFKDPELPRNTPKRSIETLLKCEFSNDCEVIARKRFREVDAVLSWLLEYAPSRLTGTGACVFAEFDTESEARQVLEQAPEWLNGFVAKGANLSPLHRAML.

Lysine 10 is an active-site residue. Residue 99–109 coordinates ATP; that stretch reads PMGGGLGGGSS. Aspartate 141 is an active-site residue.

This sequence belongs to the GHMP kinase family. IspE subfamily. In terms of assembly, homodimer.

The enzyme catalyses 4-CDP-2-C-methyl-D-erythritol + ATP = 4-CDP-2-C-methyl-D-erythritol 2-phosphate + ADP + H(+). The protein operates within isoprenoid biosynthesis; isopentenyl diphosphate biosynthesis via DXP pathway; isopentenyl diphosphate from 1-deoxy-D-xylulose 5-phosphate: step 3/6. Functionally, catalyzes the phosphorylation of the position 2 hydroxy group of 4-diphosphocytidyl-2C-methyl-D-erythritol. This is 4-diphosphocytidyl-2-C-methyl-D-erythritol kinase from Escherichia coli O157:H7 (strain EC4115 / EHEC).